A 418-amino-acid polypeptide reads, in one-letter code: 3-isopropylmalate dehydratase large subunit 1 (418 aa).

[4Fe-4S] cluster is bound by residues C298, C358, and C361.

This sequence belongs to the aconitase/IPM isomerase family. LeuC type 2 subfamily. As to quaternary structure, heterodimer of LeuC and LeuD. [4Fe-4S] cluster serves as cofactor.

It catalyses the reaction (2R,3S)-3-isopropylmalate = (2S)-2-isopropylmalate. Its pathway is amino-acid biosynthesis; L-leucine biosynthesis; L-leucine from 3-methyl-2-oxobutanoate: step 2/4. Catalyzes the isomerization between 2-isopropylmalate and 3-isopropylmalate, via the formation of 2-isopropylmaleate. The sequence is that of 3-isopropylmalate dehydratase large subunit 1 from Archaeoglobus fulgidus (strain ATCC 49558 / DSM 4304 / JCM 9628 / NBRC 100126 / VC-16).